The primary structure comprises 466 residues: 3-isopropylmalate dehydratase large subunit (466 aa).

Positions 347, 407, and 410 each coordinate [4Fe-4S] cluster.

Belongs to the aconitase/IPM isomerase family. LeuC type 1 subfamily. Heterodimer of LeuC and LeuD. The cofactor is [4Fe-4S] cluster.

It carries out the reaction (2R,3S)-3-isopropylmalate = (2S)-2-isopropylmalate. It participates in amino-acid biosynthesis; L-leucine biosynthesis; L-leucine from 3-methyl-2-oxobutanoate: step 2/4. In terms of biological role, catalyzes the isomerization between 2-isopropylmalate and 3-isopropylmalate, via the formation of 2-isopropylmaleate. This is 3-isopropylmalate dehydratase large subunit from Shewanella sediminis (strain HAW-EB3).